The primary structure comprises 138 residues: Large ribosomal subunit protein uL14 (138 aa).

It belongs to the universal ribosomal protein uL14 family. In terms of assembly, part of the 50S ribosomal subunit. Forms a cluster with proteins L3 and L24e, part of which may contact the 16S rRNA in 2 intersubunit bridges.

Functionally, binds to 23S rRNA. Forms part of two intersubunit bridges in the 70S ribosome. The protein is Large ribosomal subunit protein uL14 of Sulfurisphaera tokodaii (strain DSM 16993 / JCM 10545 / NBRC 100140 / 7) (Sulfolobus tokodaii).